A 217-amino-acid chain; its full sequence is tRNA (guanine-N(7)-)-methyltransferase (217 aa).

S-adenosyl-L-methionine-binding residues include Glu43, Asp68, Asn101, and Asn123. A substrate-binding site is contributed by Lys127. The interaction with RNA stretch occupies residues 129–134 (KHNKRR). Substrate contacts are provided by residues Asp159 and 196-199 (TEYE).

The protein belongs to the class I-like SAM-binding methyltransferase superfamily. TrmB family.

It carries out the reaction guanosine(46) in tRNA + S-adenosyl-L-methionine = N(7)-methylguanosine(46) in tRNA + S-adenosyl-L-homocysteine. It functions in the pathway tRNA modification; N(7)-methylguanine-tRNA biosynthesis. Functionally, catalyzes the formation of N(7)-methylguanine at position 46 (m7G46) in tRNA. This is tRNA (guanine-N(7)-)-methyltransferase from Clostridium botulinum (strain Okra / Type B1).